The chain runs to 302 residues: Tetrahydromethanopterin S-methyltransferase subunit E (302 aa).

6 helical membrane-spanning segments follow: residues 3 to 23 (PLIS…AGAS), 86 to 106 (PLFA…TFAV), 132 to 152 (ITPI…VSYL), 155 to 175 (VVLG…ITIG), 233 to 253 (PVTG…TTIF), and 259 to 279 (LGWL…IWNW).

It belongs to the MtrE family. In terms of assembly, the complex is composed of 8 subunits; MtrA, MtrB, MtrC, MtrD, MtrE, MtrF, MtrG and MtrH.

It is found in the cell membrane. The enzyme catalyses 5-methyl-5,6,7,8-tetrahydromethanopterin + coenzyme M + 2 Na(+)(in) = 5,6,7,8-tetrahydromethanopterin + methyl-coenzyme M + 2 Na(+)(out). It participates in one-carbon metabolism; methanogenesis from CO(2); methyl-coenzyme M from 5,10-methylene-5,6,7,8-tetrahydromethanopterin: step 2/2. Part of a complex that catalyzes the formation of methyl-coenzyme M and tetrahydromethanopterin from coenzyme M and methyl-tetrahydromethanopterin. This is an energy-conserving, sodium-ion translocating step. This chain is Tetrahydromethanopterin S-methyltransferase subunit E, found in Methanosarcina barkeri (strain Fusaro / DSM 804).